The chain runs to 677 residues: Methionine--tRNA ligase (677 aa).

The short motif at 15–25 (PYANGSIHLGH) is the 'HIGH' region element. Residues Cys-146, Cys-149, Cys-159, and Cys-162 each coordinate Zn(2+). The 'KMSKS' region motif lies at 333 to 337 (KMSKS). Lys-336 contacts ATP. Residues 575–677 (DFAKVDLRVA…DGAKPGQQVK (103 aa)) form the tRNA-binding domain.

Belongs to the class-I aminoacyl-tRNA synthetase family. MetG type 1 subfamily. In terms of assembly, homodimer. Requires Zn(2+) as cofactor.

The protein localises to the cytoplasm. The enzyme catalyses tRNA(Met) + L-methionine + ATP = L-methionyl-tRNA(Met) + AMP + diphosphate. Its function is as follows. Is required not only for elongation of protein synthesis but also for the initiation of all mRNA translation through initiator tRNA(fMet) aminoacylation. The polypeptide is Methionine--tRNA ligase (Klebsiella pneumoniae (strain 342)).